A 28-amino-acid polypeptide reads, in one-letter code: Dermaseptin-1 (28 aa).

The residue at position 28 (glutamine 28) is a Glutamine amide.

Expressed by the skin glands.

It is found in the secreted. Has antimicrobial activity. This Phyllomedusa tomopterna (Tiger-striped leaf frog) protein is Dermaseptin-1.